Reading from the N-terminus, the 214-residue chain is Adenylate kinase (214 aa).

10 to 15 contributes to the ATP binding site; it reads GAGKGT. Positions 30–59 are NMP; the sequence is STGDMFRDHKARGTEIGKQVQAIMDAGGLV. Residues Thr31, Arg36, 57–59, 85–88, and Gln92 contribute to the AMP site; these read GLV and GYPR. Residues 126 to 163 form an LID region; that stretch reads GRRSCPRCGAVYHVSQNPPHRAGFCDRDDTALVQREDD. Arg127 contributes to the ATP binding site. The Zn(2+) site is built by Cys130 and Cys133. 136–137 is a binding site for ATP; sequence VY. Positions 150 and 153 each coordinate Zn(2+). The AMP site is built by Arg160 and Arg171. Position 199 (Gly199) interacts with ATP.

This sequence belongs to the adenylate kinase family. Monomer.

It is found in the cytoplasm. It carries out the reaction AMP + ATP = 2 ADP. Its pathway is purine metabolism; AMP biosynthesis via salvage pathway; AMP from ADP: step 1/1. In terms of biological role, catalyzes the reversible transfer of the terminal phosphate group between ATP and AMP. Plays an important role in cellular energy homeostasis and in adenine nucleotide metabolism. This Anaeromyxobacter sp. (strain K) protein is Adenylate kinase.